We begin with the raw amino-acid sequence, 353 residues long: Uroporphyrinogen decarboxylase (353 aa).

Substrate is bound by residues 28-32 (RQAGR), aspartate 78, tyrosine 155, serine 210, and histidine 325.

The protein belongs to the uroporphyrinogen decarboxylase family. Homodimer.

The protein resides in the cytoplasm. It carries out the reaction uroporphyrinogen III + 4 H(+) = coproporphyrinogen III + 4 CO2. The protein operates within porphyrin-containing compound metabolism; protoporphyrin-IX biosynthesis; coproporphyrinogen-III from 5-aminolevulinate: step 4/4. Catalyzes the decarboxylation of four acetate groups of uroporphyrinogen-III to yield coproporphyrinogen-III. This chain is Uroporphyrinogen decarboxylase, found in Nostoc punctiforme (strain ATCC 29133 / PCC 73102).